Reading from the N-terminus, the 282-residue chain is NADPH-dependent 7-cyano-7-deazaguanine reductase (282 aa).

A substrate-binding site is contributed by 88–90; it reads IES. NADPH is bound at residue 90–91; it reads SK. The active-site Thioimide intermediate is cysteine 190. The active-site Proton donor is aspartate 197. Residue 229–230 participates in substrate binding; sequence HE. 258-259 provides a ligand contact to NADPH; sequence RG.

The protein belongs to the GTP cyclohydrolase I family. QueF type 2 subfamily. In terms of assembly, homodimer.

The protein resides in the cytoplasm. It catalyses the reaction 7-aminomethyl-7-carbaguanine + 2 NADP(+) = 7-cyano-7-deazaguanine + 2 NADPH + 3 H(+). It functions in the pathway tRNA modification; tRNA-queuosine biosynthesis. Catalyzes the NADPH-dependent reduction of 7-cyano-7-deazaguanine (preQ0) to 7-aminomethyl-7-deazaguanine (preQ1). This chain is NADPH-dependent 7-cyano-7-deazaguanine reductase, found in Shigella dysenteriae serotype 1 (strain Sd197).